The chain runs to 477 residues: GH30 family xylanase (477 aa).

A signal peptide spans 1-19 (MYSLLIALLCAGTAVDAQA). N-linked (GlcNAc...) asparagine glycans are attached at residues asparagine 194, asparagine 237, and asparagine 331.

Belongs to the glycosyl hydrolase 30 family.

The protein resides in the secreted. With respect to regulation, activity is enhanced by 10 mM Co(2+), Cu 2(2+) and Mn(2+) to levels as high as 44%. Partial inhibition of activity from 5 to 15% is observed in the presence of the following compouinds at a centration of 10 mM (from higher inhibition to lower): EDTA &gt; Mg(2+) &gt; urea, Zn(2+) &gt; Fe(3+). Functionally, xylanase exhibiting endo- and exo-xylanase activity. Shows the highest activity toward beechwood glucuronoxylan, which consists of a beta-1,4-linked xylose backbone decorated with the methylated form of D-glucuronic acid (MeGlcA) attached directly to the main chain at xylose C2. Also acts against wheat arabinoxylan, a xylan without MeGlcA substituents along the main chain, but the xylanase activity is about two orders of magnitude lower than that achieved in the case of beechwood xylan. Shows no activity against carob galactomannan, konjac glucomannan, or barley beta-glucan. The recombinant xylanase also exhibits an exo-activity by releasing processively disaccharide units from the non-reducing end of linear and decorated xylooligosaccharides (XOS). In Thermothelomyces thermophilus (strain ATCC 42464 / BCRC 31852 / DSM 1799) (Sporotrichum thermophile), this protein is GH30 family xylanase.